A 233-amino-acid polypeptide reads, in one-letter code: Histidinol dehydrogenase (233 aa).

3 residues coordinate substrate: Ser-31, Gln-53, and His-56. Residues Gln-53 and His-56 each coordinate Zn(2+). Catalysis depends on proton acceptor residues Glu-121 and His-122. Positions 122, 155, 209, and 214 each coordinate substrate. Residue Asp-155 coordinates Zn(2+). His-214 provides a ligand contact to Zn(2+).

This sequence belongs to the histidinol dehydrogenase family. Zn(2+) is required as a cofactor.

It carries out the reaction L-histidinol + 2 NAD(+) + H2O = L-histidine + 2 NADH + 3 H(+). The protein operates within amino-acid biosynthesis; L-histidine biosynthesis; L-histidine from 5-phospho-alpha-D-ribose 1-diphosphate: step 9/9. In terms of biological role, catalyzes the sequential NAD-dependent oxidations of L-histidinol to L-histidinaldehyde and then to L-histidine. The polypeptide is Histidinol dehydrogenase (hisD) (Thiocapsa roseopersicina).